We begin with the raw amino-acid sequence, 600 residues long: MDKKKYIRNFSIVAHIDHGKSTLADRLLEKTGTLTQREMEQQVLDTMELEKERGITIKSQAARLIYKRENGEEYILNLIDTPGHVDFTYEVSRSLAACEGAILVVDATQGIQAQTLANCYLALDNDLEIVPVINKVDLASARPDEIKQEIEDVIGIEAEDAPLVSAKTGLNIEDVLEEIVEKIPAPEGDENAPLKALIFDSYYDSYKGVVCHIRVKDGKVKPGTKIKLMSTDKVYEVVETGVFTPALMPLKEGLSAGEVGYITASIKNVRDARVGDTVTEAARPTEEALPGYKPAIPMVYSGIYPVDGAKYEELKEALEKLQINDAALSFEPETSVALGFGFRCGFLGLLHMEIIQERVEREFNLDIITTAPSVIYKVTKTNGESFDLTNPTNLPPMTEIAYMEEPVVKASIITPTDYTGAVMELCQDRRGKFIDMQYLEETRVVIHYEIPLNEIVYDFFDTLKSKTRGYASLDYELKGYEQSKLVKLDILLNGDNVDALSMIVPEVKAYQRGRAIAEKLKEIIPRHMFEVPIQAAVGSKIIARETVKAMRKDVLAKCYGGDISRKKKLLEKQKEGKKRMRQLGTVEVPQEAFMSVLKVD.

The region spanning 5 to 187 (KYIRNFSIVA…EIVEKIPAPE (183 aa)) is the tr-type G domain. GTP-binding positions include 17-22 (DHGKST) and 134-137 (NKVD).

It belongs to the TRAFAC class translation factor GTPase superfamily. Classic translation factor GTPase family. LepA subfamily.

It is found in the cell membrane. It catalyses the reaction GTP + H2O = GDP + phosphate + H(+). Its function is as follows. Required for accurate and efficient protein synthesis under certain stress conditions. May act as a fidelity factor of the translation reaction, by catalyzing a one-codon backward translocation of tRNAs on improperly translocated ribosomes. Back-translocation proceeds from a post-translocation (POST) complex to a pre-translocation (PRE) complex, thus giving elongation factor G a second chance to translocate the tRNAs correctly. Binds to ribosomes in a GTP-dependent manner. In Clostridium perfringens (strain 13 / Type A), this protein is Elongation factor 4.